The primary structure comprises 699 residues: tRNA(Met) cytidine acetyltransferase TmcA (699 aa).

Residues Q179, 201-210 (GRGKSTLAGM), and R323 contribute to the ATP site. The N-acetyltransferase domain occupies 359-543 (IEIPLYEQRD…SGCYTAMALL (185 aa)). Acetyl-CoA contacts are provided by residues 471 to 473 (VAV), E511, and R518.

The protein belongs to the RNA cytidine acetyltransferase family. TmcA subfamily.

The protein resides in the cytoplasm. The catalysed reaction is cytidine(34) in elongator tRNA(Met) + acetyl-CoA + ATP + H2O = N(4)-acetylcytidine(34) in elongator tRNA(Met) + ADP + phosphate + CoA + H(+). Functionally, catalyzes the formation of N(4)-acetylcytidine (ac(4)C) at the wobble position of tRNA(Met), by using acetyl-CoA as an acetyl donor and ATP (or GTP). In Yersinia pestis (strain D106004), this protein is tRNA(Met) cytidine acetyltransferase TmcA.